The following is a 247-amino-acid chain: Cell division protein ZapD (247 aa).

The protein belongs to the ZapD family. Interacts with FtsZ.

The protein localises to the cytoplasm. Its function is as follows. Cell division factor that enhances FtsZ-ring assembly. Directly interacts with FtsZ and promotes bundling of FtsZ protofilaments, with a reduction in FtsZ GTPase activity. This is Cell division protein ZapD from Citrobacter koseri (strain ATCC BAA-895 / CDC 4225-83 / SGSC4696).